The following is a 163-amino-acid chain: ATP synthase subunit b (163 aa).

A helical transmembrane segment spans residues 9 to 29; that stretch reads GLLIAQLINVVFVVWLLTTFL.

Belongs to the ATPase B chain family. F-type ATPases have 2 components, F(1) - the catalytic core - and F(0) - the membrane proton channel. F(1) has five subunits: alpha(3), beta(3), gamma(1), delta(1), epsilon(1). F(0) has four main subunits: a(1), b(2) and c(10-14). The alpha and beta chains form an alternating ring which encloses part of the gamma chain. F(1) is attached to F(0) by a central stalk formed by the gamma and epsilon chains, while a peripheral stalk is formed by the delta and b chains.

The protein resides in the cell membrane. In terms of biological role, f(1)F(0) ATP synthase produces ATP from ADP in the presence of a proton or sodium gradient. F-type ATPases consist of two structural domains, F(1) containing the extramembraneous catalytic core and F(0) containing the membrane proton channel, linked together by a central stalk and a peripheral stalk. During catalysis, ATP synthesis in the catalytic domain of F(1) is coupled via a rotary mechanism of the central stalk subunits to proton translocation. Functionally, component of the F(0) channel, it forms part of the peripheral stalk, linking F(1) to F(0). This Roseiflexus castenholzii (strain DSM 13941 / HLO8) protein is ATP synthase subunit b.